The following is a 322-amino-acid chain: Dioxygenase himG (322 aa).

2 residues coordinate Fe cation: His148 and His229.

Belongs to the PhyH family. As to quaternary structure, homodimer. Fe cation is required as a cofactor.

The protein operates within secondary metabolite biosynthesis. Functionally, polyketide synthase-nonribosomal peptide synthetase; part of the him gene cluster that mediates the biosynthesis of himeic acid A, a ubiquitin-activating enzyme (E1) inhibitor. First, himA, together with the trans-enoyl reductase himH, catalyzes the formation of apolyketide chain, which is then condensed with leucine by the NRPS activity of himA. Dieckmann cyclization and release from himA gives a tetramic acid intermediate as the product of himA PKS-NRPS. HimG then catalyzes alpha-oxidation of the tetramic acid ring, with a subsequent rearrangement to yield apyrone intermediate. Two terminal methyl groups of polyketide and amide side chains are oxidized to carboxylic acids by himC cytochrome P450 monooxygenase to form himeic acid A. Himeic acid A is further converted to himeic acid B and C during culture growth. No gene responsible for pyrone to pyridone conversion was found in the him gene cluster and himeic acid A is non-enzymatically converted to himeic acid C by the incorporation of an ammonium nitrogen atom in a pH5 buffer, and to himeic acid B at a conversion ratio of 50% during incubation in MeOH for 5 days. The polypeptide is Dioxygenase himG (Aspergillus japonicus).